A 385-amino-acid polypeptide reads, in one-letter code: Sensor histidine kinase Hik2 (385 aa).

Residues 11–131 (ALCRTQLELV…QQVAQTLAIA (121 aa)) form the GAF domain. [3Fe-4S] cluster is bound at residue cysteine 13. The interval 142–270 (SHSPAQPLDQ…PQLPPIWLEE (129 aa)) is DHp domain, may sense NaCl. Residues 158-381 (DLLHQLRNPV…AFTLAIPWQM (224 aa)) form the Histidine kinase domain. Histidine 161 carries the post-translational modification Phosphohistidine; by autocatalysis.

The protein belongs to the chloroplast sensor kinase protein family. As to quaternary structure, hexamers; upon treatment with 0.5 M NaCl only tetramers are seen. The tetramers are probably inactive. It depends on [3Fe-4S] cluster as a cofactor. In terms of processing, autophosphorylates, possibly on His-161.

The enzyme catalyses ATP + protein L-histidine = ADP + protein N-phospho-L-histidine.. Its function is as follows. Member of 2 two-component regulatory system(s) Hik2/Rre1 and Hik2/RppA. Transduces PQ (plastoquinone) redox signals to photosystem gene expression machinery during the adjustment of photosystem stoichiometry. Reduced PQ suppresses its autophosphorylation activity (i.e. kinase activity is higher under oxidizing conditions). As part of a two-component regulatory system with Rre1, controls expression of sigB and several other genes in response to hyperosmotic stress. May transfer phosphate to RppA in a possible Hik2/RppA two-component system. The sequence is that of Sensor histidine kinase Hik2 from Thermosynechococcus vestitus (strain NIES-2133 / IAM M-273 / BP-1).